The sequence spans 382 residues: Galactokinase (382 aa).

34-37 (EHTD) contributes to the substrate binding site. 124 to 130 (GAGLSSS) contributes to the ATP binding site. 2 residues coordinate Mg(2+): Ser130 and Glu162. The active-site Proton acceptor is the Asp174. Residue Tyr223 participates in substrate binding.

It belongs to the GHMP kinase family. GalK subfamily.

The protein resides in the cytoplasm. It catalyses the reaction alpha-D-galactose + ATP = alpha-D-galactose 1-phosphate + ADP + H(+). It participates in carbohydrate metabolism; galactose metabolism. Functionally, catalyzes the transfer of the gamma-phosphate of ATP to D-galactose to form alpha-D-galactose-1-phosphate (Gal-1-P). This Salmonella agona (strain SL483) protein is Galactokinase.